We begin with the raw amino-acid sequence, 209 residues long: Urease accessory protein UreG (209 aa).

16-23 contributes to the GTP binding site; that stretch reads GPVGSGKT.

This sequence belongs to the SIMIBI class G3E GTPase family. UreG subfamily. In terms of assembly, homodimer. UreD, UreF and UreG form a complex that acts as a GTP-hydrolysis-dependent molecular chaperone, activating the urease apoprotein by helping to assemble the nickel containing metallocenter of UreC. The UreE protein probably delivers the nickel.

The protein resides in the cytoplasm. Functionally, facilitates the functional incorporation of the urease nickel metallocenter. This process requires GTP hydrolysis, probably effectuated by UreG. The protein is Urease accessory protein UreG of Blochmanniella floridana.